A 153-amino-acid chain; its full sequence is Pheromone-binding protein Gp-9 (153 aa).

The first 19 residues, Met-1–Ala-19, serve as a signal peptide directing secretion. 3 disulfides stabilise this stretch: Cys-37–Cys-77, Cys-73–Cys-129, and Cys-118–Cys-138.

It belongs to the PBP/GOBP family. In terms of assembly, homodimer.

Its subcellular location is the secreted. Its function is as follows. Colony queen number, a major feature of social organization, is associated with worker genotype for Gp-9. Colonies are headed by either a single reproductive queen (monogyne form) or multiple queens (polygyne form). Differences in worker Gp-9 genotypes between social forms may cause differences in workers' abilities to recognize queens and regulate their numbers. The protein is Pheromone-binding protein Gp-9 of Solenopsis sp. (strain B0-153) (Fire ant).